Reading from the N-terminus, the 255-residue chain is 5-oxoprolinase subunit A (255 aa).

It belongs to the LamB/PxpA family. In terms of assembly, forms a complex composed of PxpA, PxpB and PxpC.

It catalyses the reaction 5-oxo-L-proline + ATP + 2 H2O = L-glutamate + ADP + phosphate + H(+). In terms of biological role, catalyzes the cleavage of 5-oxoproline to form L-glutamate coupled to the hydrolysis of ATP to ADP and inorganic phosphate. This Pyrococcus furiosus (strain ATCC 43587 / DSM 3638 / JCM 8422 / Vc1) protein is 5-oxoprolinase subunit A.